A 570-amino-acid polypeptide reads, in one-letter code: MTLLWCVVSLYFYGILQSDASERCDDWGLDTMRQIQVFEDEPARIKCPLFEHFLKFNYSTAHSAGLTLIWYWTRQDRDLEEPINFRLPENRISKEKDVLWFRPTLLNDTGNYTCMLRNTTYCSKVAFPLEVVQKDSCFNSPMKLPVHKLYIEYGIQRITCPNVDGYFPSSVKPTITWYMGCYKIQNFNNVIPEGMNLSFLIALISNNGNYTCVVTYPENGRTFHLTRTLTVKVVGSPKNAVPPVIHSPNDHVVYEKEPGEELLIPCTVYFSFLMDSRNEVWWTIDGKKPDDITIDVTINESISHSRTEDETRTQILSIKKVTSEDLKRSYVCHARSAKGEVAKAAKVKQKVPAPRYTVELACGFGATVLLVVILIVVYHVYWLEMVLFYRAHFGTDETILDGKEYDIYVSYARNAEEEEFVLLTLRGVLENEFGYKLCIFDRDSLPGGIVTDETLSFIQKSRRLLVVLSPNYVLQGTQALLELKAGLENMASRGNINVILVQYKAVKETKVKELKRAKTVLTVIKWKGEKSKYPQGRFWKQLQVAMPVKKSPRRSSSDEQGLSYSSLKNV.

A signal peptide spans 1 to 20 (MTLLWCVVSLYFYGILQSDA). 3 consecutive Ig-like C2-type domains span residues 21-128 (SERC…VAFP), 141-230 (PMKL…RTLT), and 242-348 (PPVI…AKVK). The Extracellular portion of the chain corresponds to 21–367 (SERCDDWGLD…VELACGFGAT (347 aa)). Disulfide bonds link Cys-24–Cys-122, Cys-47–Cys-114, Cys-137–Cys-181, Cys-160–Cys-212, and Cys-266–Cys-332. A glycan (N-linked (GlcNAc...) asparagine) is linked at Asn-57. The tract at residues 69–85 (IWYWTRQDRDLEEPINF) is essential for interaction with PTPRD. 3 N-linked (GlcNAc...) asparagine glycosylation sites follow: Asn-107, Asn-111, and Asn-118. 3 N-linked (GlcNAc...) asparagine glycosylation sites follow: Asn-196, Asn-209, and Asn-299. Residues 368-388 (VLLVVILIVVYHVYWLEMVLF) form a helical membrane-spanning segment. The Cytoplasmic segment spans residues 389–570 (YRAHFGTDET…GLSYSSLKNV (182 aa)). The TIR domain maps to 403 to 546 (KEYDIYVSYA…RFWKQLQVAM (144 aa)). Glu-482 is a catalytic residue. The interval 549–570 (KKSPRRSSSDEQGLSYSSLKNV) is disordered. Ser-557 carries the post-translational modification Phosphoserine. Polar residues predominate over residues 558-570 (DEQGLSYSSLKNV).

This sequence belongs to the interleukin-1 receptor family. The interleukin-36 receptor complex is a heterodimer of IL1RL2 and IL1RAP; the association is inhibited by IL36RN. The interleukin-1 receptor complex is a heterodimer of IL1R1 and IL1RAP. Associates with IL1R2 to form a non-signaling interleukin-1 receptor complex. Isoform 4 interacts with IL1R1 in an interleukin-1-dependent manner. Interacts with IL-33-bound IL1RL1 to form the minimal interleukin-33 signaling complex with a 1:1:1 stoichiometry. Interacts with KIT (independently of stimulation with KITLG/SCF). A mast cell-specific KITLG/SCF-induced interleukin-33 signaling complex contains IL1RL1, IL1RAP, KIT and MYD88. Interacts (via the first immunoglobilin domain) with PTPRD (via the third immunoglobilin domain); induces pre- and postsynaptic differentiation of neurons. As to expression, detected in liver, skin, placenta, thymus and lung. Isoform 4 is predominantly expressed in brain. Overexpressed on candidate chronic myeloid leukemia (CML) stem cells, hematopoietic stem cells and mononuclear cells of patients with acute myeloid leukemia (AML). Overexpressed in patients with chronic obstructive pulmonary disease (COPD). Expressed in T-helper 1 (Th1) and T-helper 2 (Th2) cell subsets.

The protein localises to the cell membrane. It localises to the secreted. It catalyses the reaction NAD(+) + H2O = ADP-D-ribose + nicotinamide + H(+). Coreceptor for IL1RL2 in the IL-36 signaling system. Coreceptor with IL1R1 in the IL-1 signaling system. Associates with IL1R1 bound to IL1B to form the high affinity interleukin-1 receptor complex which mediates interleukin-1-dependent activation of NF-kappa-B and other pathways. Signaling involves the recruitment of adapter molecules such as TOLLIP, MYD88, and IRAK1 or IRAK2 via the respective TIR domains of the receptor/coreceptor subunits. Recruits TOLLIP to the signaling complex. Does not bind to interleukin-1 alone; binding of IL1RN to IL1R1, prevents its association with IL1R1 to form a signaling complex. The cellular response is modulated through a non-signaling association with the membrane IL1R2 decoy receptor. Coreceptor for IL1RL1 in the IL-33 signaling system. Can bidirectionally induce pre- and postsynaptic differentiation of neurons by trans-synaptically binding to PTPRD. May play a role in IL1B-mediated costimulation of IFNG production from T-helper 1 (Th1) cells. Functionally, associates with secreted ligand-bound IL1R2 and increases the affinity of secreted IL1R2 for IL1B; this complex formation may be the dominant mechanism for neutralization of IL1B by secreted/soluble receptors. Enhances the ability of secreted IL1R1 to inhibit IL-33 signaling. In terms of biological role, unable to mediate canonical IL-1 signaling. Required for Src phosphorylation by IL1B. May be involved in IL1B-potentiated NMDA-induced calcium influx in neurons. The sequence is that of Interleukin-1 receptor accessory protein (IL1RAP) from Homo sapiens (Human).